A 195-amino-acid chain; its full sequence is GTP-dependent dephospho-CoA kinase (195 aa).

The GTP site is built by D49, V50, D68, E127, and D150.

Belongs to the GTP-dependent DPCK family.

It catalyses the reaction 3'-dephospho-CoA + GTP = GDP + CoA + H(+). It participates in cofactor biosynthesis; coenzyme A biosynthesis. In terms of biological role, catalyzes the GTP-dependent phosphorylation of the 3'-hydroxyl group of dephosphocoenzyme A to form coenzyme A (CoA). This is GTP-dependent dephospho-CoA kinase from Methanosarcina barkeri (strain Fusaro / DSM 804).